A 538-amino-acid polypeptide reads, in one-letter code: Succinyl-CoA:acetate CoA-transferase (538 aa).

A CoA-binding site is contributed by Gly-305–Val-309. Catalysis depends on Glu-330, which acts as the 5-glutamyl coenzyme A thioester intermediate. Residues Asn-420 and Gly-424 each coordinate CoA.

The protein belongs to the acetyl-CoA hydrolase/transferase family.

It carries out the reaction succinyl-CoA + acetate = succinate + acetyl-CoA. Functionally, forms succinyl-CoA from succinate and acetyl-CoA. The sequence is that of Succinyl-CoA:acetate CoA-transferase from Clostridium kluyveri (strain ATCC 8527 / DSM 555 / NBRC 12016 / NCIMB 10680 / K1).